A 470-amino-acid polypeptide reads, in one-letter code: Pancreatic lipase-related protein 2 (470 aa).

The signal sequence occupies residues 1 to 18 (MMLFVWTTGLLLLATARG). An intrachain disulfide couples Cys22 to Cys28. Residues 94–106 (IHGFIDNGEKDWL) form a required for galactolipase activity region. An intrachain disulfide couples Cys110 to Cys121. The active-site Nucleophile is the Ser172. The active-site Charge relay system is Asp196. Residues Glu207, Arg210, Asp212, and Asp215 each coordinate Ca(2+). Cys257 and Cys281 form a disulfide bridge. Residues 258–280 (EKNIISTIVDVNGFLEGITSLAA) form a required for galactolipase activity region. His283 acts as the Charge relay system in catalysis. Disulfide bonds link Cys305–Cys316 and Cys319–Cys324. 2 N-linked (GlcNAc...) asparagine glycosylation sites follow: Asn354 and Asn429. The PLAT domain occupies 358–470 (WRYKVSVTLS…EDVLQSLSPC (113 aa)). Residues Cys454 and Cys470 are joined by a disulfide bond.

Belongs to the AB hydrolase superfamily. Lipase family. In terms of tissue distribution, pancreas.

It localises to the secreted. Its subcellular location is the zymogen granule membrane. The protein resides in the cell projection. The protein localises to the neuron projection. The enzyme catalyses a triacylglycerol + H2O = a diacylglycerol + a fatty acid + H(+). It carries out the reaction a 1,2-diacyl-3-O-(beta-D-galactosyl)-sn-glycerol + 2 H2O = 3-beta-D-galactosyl-sn-glycerol + 2 a fatty acid + 2 H(+). It catalyses the reaction 1,2,3-tri-(9Z-octadecenoyl)-glycerol + H2O = di-(9Z)-octadecenoylglycerol + (9Z)-octadecenoate + H(+). The catalysed reaction is di-(9Z)-octadecenoylglycerol + H2O = (9Z-octadecenoyl)-glycerol + (9Z)-octadecenoate + H(+). The enzyme catalyses (9Z-octadecenoyl)-glycerol + H2O = glycerol + (9Z)-octadecenoate + H(+). It carries out the reaction 1-(9Z-octadecenoyl)-glycerol + H2O = glycerol + (9Z)-octadecenoate + H(+). It catalyses the reaction 1,2,3-tripropanoylglycerol + H2O = dipropanoylglycerol + propanoate + H(+). The catalysed reaction is 1,2,3-tributanoylglycerol + H2O = dibutanoylglycerol + butanoate + H(+). The enzyme catalyses 1,2,3-trioctanoylglycerol + H2O = dioctanoylglycerol + octanoate + H(+). It carries out the reaction 1,2-didecanoylglycerol + H2O = decanoylglycerol + decanoate + H(+). It catalyses the reaction long chain 1,2-diacyl-3-O-beta-D-galactosyl-sn-glycerol + H2O = long chain acyl-3-O-beta-D-galactosyl-sn-glycerol + a fatty acid + H(+). The catalysed reaction is 1,2-dioctanoyl-3-O-beta-D-galactosyl-sn-glycerol + H2O = octanoyl-3-(beta-D-galactosyl)-sn-glycerol + octanoate + H(+). The enzyme catalyses 1,2-didodecanoyl-3-beta-D-galactosyl-sn-glycerol + H2O = dodecanoyl-3-beta-D-galactosyl-sn-glycerol + dodecanoate + H(+). It carries out the reaction 1-beta-D-galactosyl-2,3-didodecanoyl-sn-glycerol + H2O = 1-beta-D-galactosyl-dodecanoyl-sn-glycerol + dodecanoate + H(+). It catalyses the reaction a 1,2-diacyl-3-O-[alpha-D-galactosyl-(1-&gt;6)-beta-D-galactosyl]-sn-glycerol + H2O = acyl-3-O-[alpha-D-galactosyl-(1-&gt;6)-beta-D-galactosyl]-sn-glycerol + a fatty acid + H(+). The catalysed reaction is long chain 1,2-diacyl-3-O-[alpha-D-galactosyl-(1-&gt;6)-beta-D-galactosyl]-sn-glycerol + H2O = long chain acyl-3-O-[alpha-D-galactosyl-(1-&gt;6)-beta-D-galactosyl]-sn-glycerol + a fatty acid + H(+). The enzyme catalyses 1,2-dioctanoyl-3-O-[alpha-D-galactosyl-(1-&gt;6)-beta-D-galactosyl]-sn-glycerol + H2O = octanoyl-3-O-[alpha-D-galactosyl-(1-&gt;6)-beta-D-galactosyl]-sn-glycerol + octanoate + H(+). It carries out the reaction 1,2-didodecanoyl-3-O-[alpha-D-galactosyl-(1-&gt;6)-beta-D-galactosyl]-sn-glycerol + H2O = dodecanoyl-3-O-[alpha-D-galactosyl-(1-&gt;6)-beta-D-galactosyl]-sn-glycerol + dodecanoate + H(+). It catalyses the reaction a 1,2-diacyl-sn-glycero-3-phosphocholine + H2O = a monoacyl-sn-glycero-3-phosphocholine + a fatty acid + H(+). The protein operates within glycerolipid metabolism; triacylglycerol degradation. Its pathway is glycolipid metabolism. With respect to regulation, triacylglycerol lipase activity is inhibited by increasing bile salts concentrations and not reactivated by CLPS. In terms of biological role, lipase that primarily hydrolyzes triglycerides and galactosylglycerides. In neonates, may play a major role in pancreatic digestion of dietary fats such as milk fat globules enriched in long-chain triglycerides. Hydrolyzes short-, medium- and long-chain fatty acyls in triglycerides without apparent positional specificity. Can completely deacylate triacylglycerols. When the liver matures and bile salt synthesis increases, likely functions mainly as a galactolipase and monoacylglycerol lipase. Hydrolyzes monogalactosyldiglycerols (MGDG) and digalactosyldiacylglycerols (DGDG) present in a plant-based diet, releasing long-chain polyunsaturated fatty acids. Hydrolyzes medium- and long-chain fatty acyls in galactolipids. May act together with LIPF to hydrolyze partially digested triglycerides. Hydrolyzes long-chain monoglycerides with high efficiency. In cytotoxic T cells, contributes to perforin-dependent cell lysis, but is unlikely to mediate direct cytotoxicity. Also has low phospholipase activity. In neurons, required for the localization of the phospholipid 1-oleoyl-2-palmitoyl-PC (OPPC) to neurite tips through acyl chain remodeling of membrane phospholipids. The resulting OPPC-rich lipid membrane domain recruits the t-SNARE protein STX4 by selectively interacting with the STX4 transmembrane domain and this promotes surface expression of the dopamine transporter SLC6A3/DAT at neurite tips by facilitating fusion of SLC6A3-containing transport vesicles with the plasma membrane. In Myocastor coypus (Coypu), this protein is Pancreatic lipase-related protein 2.